A 483-amino-acid chain; its full sequence is Cysteine proteinase 1, mitochondrial (483 aa).

A mitochondrion-targeting transit peptide spans 1–30 (MLPTSVSRSLYLKTFRSHLLRAPQIVLKRM). Residues Cys-102, His-398, and Asn-421 contribute to the active site. Lys-483 is a propeptide (removed in mature form; by autocatalysis).

It belongs to the peptidase C1 family. As to quaternary structure, homohexamer. Binds to nucleic acids. Binds single-stranded DNA and RNA with higher affinity than double-stranded DNA. Post-translationally, the N-terminus of isoform Cytoplasmic is blocked.

Its subcellular location is the mitochondrion. The protein localises to the cytoplasm. The enzyme catalyses Inactivates bleomycin B2 (a cytotoxic glycometallopeptide) by hydrolysis of a carboxyamide bond of beta-aminoalanine, but also shows general aminopeptidase activity. The specificity varies somewhat with source, but amino acid arylamides of Met, Leu and Ala are preferred.. Its activity is regulated as follows. Inhibited by E64, a specific inhibitor of cysteine proteases, N-ethylmaleimide, iodacetamide, and mercury and zinc ions. Functionally, the normal physiological role of the enzyme is unknown, but it is not essential for the viability of yeast cells. Has aminopeptidase activity, shortening substrate peptides sequentially by 1 amino acid. Has bleomycin hydrolase activity, which can protect the cell from the toxic effects of bleomycin. Has homocysteine-thiolactonase activity, protecting the cell against homocysteine toxicity. Acts as a repressor in the GAL4 regulatory system, but this does not require either the peptidase or nucleic acid-binding activities. The polypeptide is Cysteine proteinase 1, mitochondrial (LAP3) (Saccharomyces cerevisiae (strain JAY291) (Baker's yeast)).